A 362-amino-acid polypeptide reads, in one-letter code: 2-aminoethylphosphonate--pyruvate transaminase (362 aa).

N6-(pyridoxal phosphate)lysine is present on lysine 193.

Belongs to the class-V pyridoxal-phosphate-dependent aminotransferase family. PhnW subfamily. Homodimer. Requires pyridoxal 5'-phosphate as cofactor.

It catalyses the reaction (2-aminoethyl)phosphonate + pyruvate = phosphonoacetaldehyde + L-alanine. Its function is as follows. Involved in phosphonate degradation. The protein is 2-aminoethylphosphonate--pyruvate transaminase of Bacteroides fragilis (strain ATCC 25285 / DSM 2151 / CCUG 4856 / JCM 11019 / LMG 10263 / NCTC 9343 / Onslow / VPI 2553 / EN-2).